Consider the following 466-residue polypeptide: Coagulation factor VII (466 aa).

An N-terminal signal peptide occupies residues 1-20 (MVSQALRLLCLLLGLQGCLA). A propeptide spanning residues 21 to 60 (AGGVAEASGGETRDMPWKPGPHRVFITQEEAHGVLHRRRR) is cleaved from the precursor. Residues 61–105 (ANAFLEELRPGSLERECKEEQCSFEEAREIFKDLERTKLFWISYS) enclose the Gla domain. Residues Glu-66, Glu-67, Glu-74, Glu-76, Glu-79, Glu-80, Glu-85, Glu-86, Glu-89, and Glu-95 each carry the 4-carboxyglutamate modification. Residues Cys-77 and Cys-82 are joined by a disulfide bond. Positions 106–142 (DGDQCASSPCQNGGSCKDQLQSYICFCLPAFEGRNCE) constitute an EGF-like 1; calcium-binding domain. Disulfide bonds link Cys-110-Cys-121, Cys-115-Cys-130, Cys-132-Cys-141, Cys-151-Cys-162, Cys-158-Cys-172, Cys-174-Cys-187, Cys-195-Cys-322, Cys-219-Cys-224, Cys-238-Cys-254, and Cys-370-Cys-389. Ser-112 carries an O-linked (Glc...) serine; alternate glycan. An O-linked (Xyl...) serine; alternate glycan is attached at Ser-112. Ser-120 carries O-linked (Fuc) serine glycosylation. The residue at position 123 (Asp-123) is a (3R)-3-hydroxyaspartate. The region spanning 147–188 (DQLICVNENGGCEQYCSDHTGTKRSCRCHEGYSLLADGVSCT) is the EGF-like 2 domain. N-linked (GlcNAc...) asparagine glycosylation is present at Asn-205. The Peptidase S1 domain maps to 213 to 452 (IVGGKVCPKG…YIEWLQKLMR (240 aa)). Catalysis depends on charge relay system residues His-253 and Asp-302. An N-linked (GlcNAc...) asparagine glycan is attached at Asn-382. Residue Asp-398 participates in substrate binding. Cysteines 400 and 428 form a disulfide. Ser-404 functions as the Charge relay system in the catalytic mechanism.

Belongs to the peptidase S1 family. In terms of assembly, heterodimer of a light chain and a heavy chain linked by a disulfide bond. The vitamin K-dependent, enzymatic carboxylation of some glutamate residues allows the modified protein to bind calcium. In terms of processing, the iron and 2-oxoglutarate dependent 3-hydroxylation of aspartate and asparagine is (R) stereospecific within EGF domains. Post-translationally, O-glycosylated. O-fucosylated by POFUT1 on a conserved serine or threonine residue found in the consensus sequence C2-X(4,5)-[S/T]-C3 of EGF domains, where C2 and C3 are the second and third conserved cysteines. Can be either O-glucosylated or O-xylosylated at Ser-112 by POGLUT1.

The protein resides in the secreted. The enzyme catalyses Selective cleavage of Arg-|-Ile bond in factor X to form factor Xa.. Functionally, initiates the extrinsic pathway of blood coagulation. Serine protease that circulates in the blood in a zymogen form. Factor VII is converted to factor VIIa by factor Xa, factor XIIa, factor IXa, or thrombin by minor proteolysis. In the presence of tissue factor and calcium ions, factor VIIa then converts factor X to factor Xa by limited proteolysis. Factor VIIa also converts factor IX to factor IXa in the presence of tissue factor and calcium. This chain is Coagulation factor VII (F7), found in Pan paniscus (Pygmy chimpanzee).